A 185-amino-acid chain; its full sequence is Urease accessory protein UreE (185 aa).

The disordered stretch occupies residues 153 to 185; the sequence is LRANSAQGHGHSHSHSHDHHGYHHHGDGHWHKH. Basic residues predominate over residues 162–175; it reads GHSHSHSHDHHGYH. Basic and acidic residues predominate over residues 176-185; that stretch reads HHGDGHWHKH.

Belongs to the UreE family.

It is found in the cytoplasm. Involved in urease metallocenter assembly. Binds nickel. Probably functions as a nickel donor during metallocenter assembly. The polypeptide is Urease accessory protein UreE (Haemophilus influenzae (strain 86-028NP)).